We begin with the raw amino-acid sequence, 362 residues long: METRKIIHVDMDAFYASVEQRDFPEYKGKPLIVGGPPNSRSVVSAASYEARKFGVRSAMPCSKAAQLAPQAIFVFPRFEVYKEVSKQIREIFLEYTDLVEMLSLDEGYLDVTFNKKNIPYAVTIAKEIRTEIFKRTELTASAGVGNSKFISKLASEKNKPNGLTVVLPDDVISFIDPLPVSSFHGVGKVTARKMKELGIYTGKDLRTKSIDELVQHFGKMGIYYYKISRGEDERMVQSSRERKSLGAESTFDRDKLDYDDLLKQLKDVAVVVERRLEKKDFAGKTLTLKIKFYDFSLKTRSKTLSEPIFKADELYSTAIELFEEFFEIKYGKKSAIKAIRLLGISLSHPNSENEDPNLFLNL.

The UmuC domain maps to 6–187 (IIHVDMDAFY…LPVSSFHGVG (182 aa)). D10 and D105 together coordinate Mg(2+). Residue E106 is part of the active site.

This sequence belongs to the DNA polymerase type-Y family. In terms of assembly, monomer. Mg(2+) is required as a cofactor.

The protein localises to the cytoplasm. The catalysed reaction is DNA(n) + a 2'-deoxyribonucleoside 5'-triphosphate = DNA(n+1) + diphosphate. Poorly processive, error-prone DNA polymerase involved in untargeted mutagenesis. Copies undamaged DNA at stalled replication forks, which arise in vivo from mismatched or misaligned primer ends. These misaligned primers can be extended by PolIV. Exhibits no 3'-5' exonuclease (proofreading) activity. May be involved in translesional synthesis, in conjunction with the beta clamp from PolIII. In Leptospira interrogans serogroup Icterohaemorrhagiae serovar Lai (strain 56601), this protein is DNA polymerase IV.